Consider the following 362-residue polypeptide: Myricetin 3'-O-methyltransferase 4 (362 aa).

Aspartate 229 contacts S-adenosyl-L-methionine. Histidine 267 acts as the Proton acceptor in catalysis.

The protein belongs to the class I-like SAM-binding methyltransferase superfamily. Cation-independent O-methyltransferase family. In terms of assembly, homodimer. Mainly expressed in stem and petiole trichomes.

The enzyme catalyses myricetin + S-adenosyl-L-methionine = laricitrin + S-adenosyl-L-homocysteine + H(+). It participates in flavonoid metabolism. Its function is as follows. Flavonoid 3'-O-methyltransferase involved in the biosynthesis of polymethoxylated flavonoids natural products such as myricetin derivatives, aroma compounds possessing antioxidant properties and exhibiting pharmacological activities such as anti-carcinogen, anti-viral, anti-thrombotic, anti-diabetic, anti-atherosclerotic, and anti-inflammatory effects. Catalyzes S-adenosylmethionine-dependent regioselective 3'-O-methylation of flavonoids; active on various hydroxylated flavonoid substrates, including myricetin, thus producing 3'-methyl myricetin (laricitrin). This chain is Myricetin 3'-O-methyltransferase 4, found in Solanum lycopersicum (Tomato).